We begin with the raw amino-acid sequence, 196 residues long: MQEPHNQEPIEEQKLSEMEDTLEKQHSGASTENTERAEEGVVIPDLEQQLKEAEIRAAEHHDAWLRAKAETENIRKRAQTDIANAHKYAIDNFATQLLAVMDSLDAALAVENSTIESLKDGVELTRKQLAAVFEKFNIHTINPQGEKFDPHQHEAMCTVESDIPPNTVTQVMQKGYVLHERVIRPAMVAVSKAKST.

The span at 1–26 (MQEPHNQEPIEEQKLSEMEDTLEKQH) shows a compositional bias: basic and acidic residues. The disordered stretch occupies residues 1–40 (MQEPHNQEPIEEQKLSEMEDTLEKQHSGASTENTERAEEG).

The protein belongs to the GrpE family. Homodimer.

It localises to the cytoplasm. Participates actively in the response to hyperosmotic and heat shock by preventing the aggregation of stress-denatured proteins, in association with DnaK and GrpE. It is the nucleotide exchange factor for DnaK and may function as a thermosensor. Unfolded proteins bind initially to DnaJ; upon interaction with the DnaJ-bound protein, DnaK hydrolyzes its bound ATP, resulting in the formation of a stable complex. GrpE releases ADP from DnaK; ATP binding to DnaK triggers the release of the substrate protein, thus completing the reaction cycle. Several rounds of ATP-dependent interactions between DnaJ, DnaK and GrpE are required for fully efficient folding. This Nitrosomonas eutropha (strain DSM 101675 / C91 / Nm57) protein is Protein GrpE.